The sequence spans 358 residues: Protein RecA (358 aa).

67–74 (GPESSGKT) is a binding site for ATP.

It belongs to the RecA family.

It is found in the cytoplasm. In terms of biological role, can catalyze the hydrolysis of ATP in the presence of single-stranded DNA, the ATP-dependent uptake of single-stranded DNA by duplex DNA, and the ATP-dependent hybridization of homologous single-stranded DNAs. It interacts with LexA causing its activation and leading to its autocatalytic cleavage. This is Protein RecA from Xenorhabdus nematophila (strain ATCC 19061 / DSM 3370 / CCUG 14189 / LMG 1036 / NCIMB 9965 / AN6).